A 208-amino-acid polypeptide reads, in one-letter code: Protein-L-isoaspartate O-methyltransferase (208 aa).

Ser-59 is a catalytic residue.

This sequence belongs to the methyltransferase superfamily. L-isoaspartyl/D-aspartyl protein methyltransferase family.

It is found in the cytoplasm. The enzyme catalyses [protein]-L-isoaspartate + S-adenosyl-L-methionine = [protein]-L-isoaspartate alpha-methyl ester + S-adenosyl-L-homocysteine. In terms of biological role, catalyzes the methyl esterification of L-isoaspartyl residues in peptides and proteins that result from spontaneous decomposition of normal L-aspartyl and L-asparaginyl residues. It plays a role in the repair and/or degradation of damaged proteins. In Yersinia pseudotuberculosis serotype O:1b (strain IP 31758), this protein is Protein-L-isoaspartate O-methyltransferase.